A 520-amino-acid chain; its full sequence is GMP synthase [glutamine-hydrolyzing] (520 aa).

One can recognise a Glutamine amidotransferase type-1 domain in the interval 9 to 202 (SVLIVDFGSQ…IHNIAGIKGD (194 aa)). The active-site Nucleophile is C86. Catalysis depends on residues H176 and E178. Residues 203-395 (WSMSAYRQKA…LGLPDSFIGR (193 aa)) form the GMPS ATP-PPase domain. 230 to 236 (SGGVDSS) contacts ATP.

In terms of assembly, homodimer.

The enzyme catalyses XMP + L-glutamine + ATP + H2O = GMP + L-glutamate + AMP + diphosphate + 2 H(+). Its pathway is purine metabolism; GMP biosynthesis; GMP from XMP (L-Gln route): step 1/1. Its function is as follows. Catalyzes the synthesis of GMP from XMP. This is GMP synthase [glutamine-hydrolyzing] from Rhizobium etli (strain CIAT 652).